We begin with the raw amino-acid sequence, 118 residues long: Small ribosomal subunit protein uS13 (118 aa).

Residues 91 to 118 (HRRGLPVRGQRTKTNARTRKGPRKPIKK) are disordered.

Belongs to the universal ribosomal protein uS13 family. Part of the 30S ribosomal subunit. Forms a loose heterodimer with protein S19. Forms two bridges to the 50S subunit in the 70S ribosome.

In terms of biological role, located at the top of the head of the 30S subunit, it contacts several helices of the 16S rRNA. In the 70S ribosome it contacts the 23S rRNA (bridge B1a) and protein L5 of the 50S subunit (bridge B1b), connecting the 2 subunits; these bridges are implicated in subunit movement. Contacts the tRNAs in the A and P-sites. This Sodalis glossinidius (strain morsitans) protein is Small ribosomal subunit protein uS13.